The primary structure comprises 125 residues: Large ribosomal subunit protein bL12 (125 aa).

In terms of assembly, homodimer. Part of the ribosomal stalk of the 50S ribosomal subunit. Forms a multimeric L10(L12)X complex, where L10 forms an elongated spine to which 2 to 4 L12 dimers bind in a sequential fashion. Binds GTP-bound translation factors. Post-translationally, two isoforms seem to exist. One is probably dimethylated on Lys-69 and monomethylated on Lys-86 while the other is probably acetylated or trimethylated on both Lys-86 and Lys-89.

Forms part of the ribosomal stalk which helps the ribosome interact with GTP-bound translation factors. Is thus essential for accurate translation. In Rhodopseudomonas palustris (strain ATCC BAA-98 / CGA009), this protein is Large ribosomal subunit protein bL12.